A 1022-amino-acid chain; its full sequence is Protein translocase subunit SecA (1022 aa).

Residues glutamine 143, 161-165 (GEGKT), and aspartate 661 each bind ATP. A disordered region spans residues 973–1001 (AGSILSHESDVPSGTAAQQPIKADVKPGR). Zn(2+)-binding residues include cysteine 1005, cysteine 1007, cysteine 1016, and histidine 1017.

It belongs to the SecA family. Monomer and homodimer. Part of the essential Sec protein translocation apparatus which comprises SecA, SecYEG and auxiliary proteins SecDF. Other proteins may also be involved. Zn(2+) serves as cofactor.

The protein resides in the cell inner membrane. It localises to the cytoplasm. The enzyme catalyses ATP + H2O + cellular proteinSide 1 = ADP + phosphate + cellular proteinSide 2.. Functionally, part of the Sec protein translocase complex. Interacts with the SecYEG preprotein conducting channel. Has a central role in coupling the hydrolysis of ATP to the transfer of proteins into and across the cell membrane, serving as an ATP-driven molecular motor driving the stepwise translocation of polypeptide chains across the membrane. This Chlorobium phaeobacteroides (strain DSM 266 / SMG 266 / 2430) protein is Protein translocase subunit SecA.